The chain runs to 292 residues: Tetratricopeptide repeat protein 1 (292 aa).

The interval 20–125 (TDPQEAECLH…SSRLKEEGNE (106 aa)) is disordered. Composition is skewed to basic and acidic residues over residues 36 to 49 (KEQHSQSELLKDVD) and 75 to 85 (GADKLENKPED). Residues 86 to 98 (DMNPSELDEEYLM) show a composition bias toward acidic residues. A Phosphoserine modification is found at Ser90. Over residues 99-125 (ELEKNMPDEEKKRRREESSRLKEEGNE) the composition is skewed to basic and acidic residues. TPR repeat units lie at residues 116-149 (SSRLKEEGNEQFKKGDYIEAESSYTRALQTCPSC), 155-188 (SVLFSNRAAARMKQEKKEMAISDCSKAIQLNPSY), and 189-222 (IRAILRRAELYEKTDKLDEALEDYKSILEKDPSV).

Interacts with the GAP domain of NF1. Interacts (via TPR repeats) with HSP90AA1 and HSPA8.

This chain is Tetratricopeptide repeat protein 1 (TTC1), found in Bos taurus (Bovine).